The following is a 423-amino-acid chain: MVSNQDYTEKIRQLMKDHNSWMESSINLIASENITSSRVKEALLSDLSHRYAEGLPGERLYEGCRYIDEIEELTIELSKRLFRAEHANVQPTSGVVANLACFFATAEVGDPIMAMEVPYGGHISHARVSAAGVRGFQIYTHPFDFENMNIDADAMKKKILEVKPRIILFGGSLFLFPHPVEEALEAAEEVGARIMYDGAHVLGLIAGGYFQDPLREGADMLVGSTHKTFPGPQGGIILCREELAADIDEAVFPGLVSNHHLHHVAGLGIATAEMLEFGAEYAAQTINNARKLAENLHELGFNVLCEHLDFTESHQVVMDVSDIGRAAEISKRLEANNIILNKNLLPWDDVNRSDDPSGIRIGTQEITRRGMKESEMSEVAEYIKRVVMDGKDVRDEVAEFMSSYTRVHYAFEDSEAYKYMEIQ.

Position 121–123 (121–123) interacts with (6S)-5,6,7,8-tetrahydrofolate; the sequence is GHI. Position 227 is an N6-(pyridoxal phosphate)lysine (Lys227). Residue Glu242 participates in (6S)-5,6,7,8-tetrahydrofolate binding.

This sequence belongs to the SHMT family. In terms of assembly, homodimer. It depends on pyridoxal 5'-phosphate as a cofactor.

The protein localises to the cytoplasm. It carries out the reaction 5,10-methylenetetrahydromethanopterin + glycine + H2O = 5,6,7,8-tetrahydromethanopterin + L-serine. It functions in the pathway amino-acid biosynthesis; glycine biosynthesis; glycine from L-serine: step 1/1. Catalyzes the reversible interconversion of serine and glycine with tetrahydromethanopterin (H4MPT) serving as the one-carbon carrier. Cannot use tetrahydrofolate (THF or H4PteGlu) instead of H4MPT as the pteridine substrate. Also probably exhibits a pteridine-independent aldolase activity toward beta-hydroxyamino acids, producing glycine and aldehydes, via a retro-aldol mechanism. The protein is Serine hydroxymethyltransferase of Methanothermobacter thermautotrophicus (strain ATCC 29096 / DSM 1053 / JCM 10044 / NBRC 100330 / Delta H) (Methanobacterium thermoautotrophicum).